Reading from the N-terminus, the 566-residue chain is MLNAYKHSGKAELKPVISKIIAEIPEIRRHVREVIDIVRETINEVNQLPIEKQKEIIEKNWPELLEEKPRTEEKSLPPLPNAAKGRVVTRFAPNPDYTIHLGNARPALLSYWYAEMYEGKMILRFEDTDPRTKAPFPEAYDRIRNDLKWLGIKWNEEYIQSLRLPILYNALRELIKHGGAYVDKCSPKEFKKLRDSGKPCPHRELPPEKHLEELDRIFEGYYSEGEAVVRVKTDLSHPDPSVRDWVAARIIDTSKTPHPIVGDKYILWPTYNLAAAIDDHLMGVTHILRAKEHVSNTIKQKFLYDHMGWKYPETIHFGRLSLEGVILSKSRMRKMIVEYNMEPYDDPRFGTLSGLRRRGIVRETLWRIIKDVGINVIDARISYVNLAAINRSIIDPQAKRYMAIEEALPLKLIGFNNSIEAHVLRHPSTRETYNYIIKPGDIVYISQKDFNIIQNKMFRLMGIGNFALTRPVFSKNYIGFEARLISLSAKEAKQYRAPIIQWVKLEQSIRVKLIIPKETNLETRILLAEKALTNEELGNIVQFYRIGFARIDSKEPEEIKCIFAHE.

Positions 93–103 (PNPDYTIHLGN) match the 'HIGH' region motif.

The protein belongs to the class-I aminoacyl-tRNA synthetase family. Glutamate--tRNA ligase type 2 subfamily.

It localises to the cytoplasm. The enzyme catalyses tRNA(Glu) + L-glutamate + ATP = L-glutamyl-tRNA(Glu) + AMP + diphosphate. Catalyzes the attachment of glutamate to tRNA(Glu) in a two-step reaction: glutamate is first activated by ATP to form Glu-AMP and then transferred to the acceptor end of tRNA(Glu). The polypeptide is Glutamate--tRNA ligase (Staphylothermus marinus (strain ATCC 43588 / DSM 3639 / JCM 9404 / F1)).